The primary structure comprises 341 residues: MTSSDPTLRPERLPEDMDRALRPQSLEEFVGQAEARANLRVFIESARMRGEAMDHTLFHGPPGLGKTTLAQIMARELGVGFRMTSGPVLAKPGDLAAILTNLEPRDVLFIDEIHRLSPVVEEVLYPALEDFALDLVIGEGPAARTVRIDLQPFTLVGATTRLGLLTTPLRDRFGIPTRLQFYTEDELDLIVARGARMMGVDSDPEGTREIARRARGTPRIAGRLLRRVVDFALVEGDGRLTQAIADRALTRLGVDHLGLDLGDRRYIGLIAENYGGGPVGIETIAAALSESRDAVEEVIEPYLLQQGLIQRTPRGRMLAHKAWRHMGIEPPKGPGQSDLFG.

Residues 1-182 (MTSSDPTLRP…FGIPTRLQFY (182 aa)) form a large ATPase domain (RuvB-L) region. ATP contacts are provided by residues L21, R22, G63, K66, T67, T68, 129 to 131 (EDF), R172, Y182, and R219. T67 provides a ligand contact to Mg(2+). The interval 183–253 (TEDELDLIVA…IADRALTRLG (71 aa)) is small ATPAse domain (RuvB-S). The segment at 256–341 (HLGLDLGDRR…KGPGQSDLFG (86 aa)) is head domain (RuvB-H). R292, R311, and R316 together coordinate DNA.

It belongs to the RuvB family. As to quaternary structure, homohexamer. Forms an RuvA(8)-RuvB(12)-Holliday junction (HJ) complex. HJ DNA is sandwiched between 2 RuvA tetramers; dsDNA enters through RuvA and exits via RuvB. An RuvB hexamer assembles on each DNA strand where it exits the tetramer. Each RuvB hexamer is contacted by two RuvA subunits (via domain III) on 2 adjacent RuvB subunits; this complex drives branch migration. In the full resolvosome a probable DNA-RuvA(4)-RuvB(12)-RuvC(2) complex forms which resolves the HJ.

The protein resides in the cytoplasm. It catalyses the reaction ATP + H2O = ADP + phosphate + H(+). In terms of biological role, the RuvA-RuvB-RuvC complex processes Holliday junction (HJ) DNA during genetic recombination and DNA repair, while the RuvA-RuvB complex plays an important role in the rescue of blocked DNA replication forks via replication fork reversal (RFR). RuvA specifically binds to HJ cruciform DNA, conferring on it an open structure. The RuvB hexamer acts as an ATP-dependent pump, pulling dsDNA into and through the RuvAB complex. RuvB forms 2 homohexamers on either side of HJ DNA bound by 1 or 2 RuvA tetramers; 4 subunits per hexamer contact DNA at a time. Coordinated motions by a converter formed by DNA-disengaged RuvB subunits stimulates ATP hydrolysis and nucleotide exchange. Immobilization of the converter enables RuvB to convert the ATP-contained energy into a lever motion, pulling 2 nucleotides of DNA out of the RuvA tetramer per ATP hydrolyzed, thus driving DNA branch migration. The RuvB motors rotate together with the DNA substrate, which together with the progressing nucleotide cycle form the mechanistic basis for DNA recombination by continuous HJ branch migration. Branch migration allows RuvC to scan DNA until it finds its consensus sequence, where it cleaves and resolves cruciform DNA. The sequence is that of Holliday junction branch migration complex subunit RuvB from Cereibacter sphaeroides (strain ATCC 17029 / ATH 2.4.9) (Rhodobacter sphaeroides).